The chain runs to 391 residues: Probable inactive allantoicase (391 aa).

Belongs to the allantoicase family.

Its function is as follows. The function of this enzyme is unclear as allantoicase activity is not known to exist in mammals. This chain is Probable inactive allantoicase, found in Homo sapiens (Human).